The chain runs to 651 residues: MVKLAKGAKTQAKPKKAAPPPPKDMEDSEEEEDMEEDDSSDEEVEVPVKKTPAKKTATPAKATPGKAATPGKKGATPAKNGKQAKKQESEEEEDDSDEEAEDQKPIKNKPVAKKAVAKKEESEEDDDDEDESEEEKAVAKKPTPAKKPAGKKQESEEEDDEESEDEPMEVAPALKGKKTAQAAEEDDEEEDDDDEEDDDDEEEQQGSAKRKKEMPKTIPEAKKTKTDTASEGLSIFIGNLNSTKEFDELKDALREFFSKKNLTIQDIRIGNSKKFGYVDFSSEEEVEKALKLTGKKILGTEVKIEKAMAFDKNKTAENKKERDSRTLFVKNIPYSTTVEELQEIFENAKDIRIPTGKDGSNKGIAYVEFSNEDEANKALEEKQGAEIEGRSIFVDFTGEKSQNSGNKKGPEGDSKVLVVNNLSYSATEDSLREVFEKATSIRIPQNQGRAKGFAFIEFSSAEDAKDAMDSCNNTEIEGRSIRLEFSQGGGPQGGGRGGSAQSKTLFVRGLSEDTTEETLKEAFDGSVNARIVTDRDTGASKGFGFVDFSTAEDAKAAKEAMEDGEIDGNKVTLDFAKPKGDSQRGGRGGFGRGGGFRGGRGGRGGGGGRGFGGRGGGRGRGGFGGRGGGGFRGGQGGGFRGGQGKKMRFDD.

A compositionally biased stretch (low complexity) spans 1–11; sequence MVKLAKGAKTQ. A disordered region spans residues 1 to 230; sequence MVKLAKGAKT…AKKTKTDTAS (230 aa). Over residues 26-45 the composition is skewed to acidic residues; it reads EDSEEEEDMEEDDSSDEEVE. A compositionally biased stretch (low complexity) spans 54-79; the sequence is KKTATPAKATPGKAATPGKKGATPAK. Residues 89–101 show a composition bias toward acidic residues; the sequence is SEEEEDDSDEEAE. Residues 106–116 show a composition bias toward basic residues; that stretch reads IKNKPVAKKAV. Acidic residues-rich tracts occupy residues 122 to 134, 155 to 168, and 183 to 204; these read SEEDDDDEDESEE, SEEEDDEESEDEPM, and AEEDDEEEDDDDEEDDDDEEEQ. Phosphoserine is present on Ser-155. Residues 219-228 show a composition bias toward basic and acidic residues; that stretch reads PEAKKTKTDT. RRM domains are found at residues 233–309, 325–399, 415–488, and 503–578; these read LSIF…KAMA, RTLF…FTGE, KVLV…FSQG, and KTLF…FAKP. The interval 574 to 651 is disordered; that stretch reads DFAKPKGDSQ…GQGKKMRFDD (78 aa). A compositionally biased stretch (gly residues) spans 585-644; the sequence is GGRGGFGRGGGFRGGRGGRGGGGGRGFGGRGGGRGRGGFGGRGGGGFRGGQGGGFRGGQG.

Its subcellular location is the nucleus. The protein localises to the nucleolus. In terms of biological role, nucleolin is the major nucleolar protein of growing eukaryotic cells. It is found associated with intranucleolar chromatin and pre-ribosomal particles. It induces chromatin decondensation by binding to histone H1. It is thought to play a role in pre-rRNA transcription and ribosome assembly. In Xenopus laevis (African clawed frog), this protein is Nucleolin (ncl).